Reading from the N-terminus, the 455-residue chain is MVNKNAIILAAGKGTRMKSKLHKVLHQVCGKTMVEHVLTQLQAADIQNIVTVVGYGADTVKDALGDQVRYALQKQQLGTGHAVMQTEDLLGELAGQTLVVSGDTPLFTAATFNHLFQYHEQRHAAVTILTSKAPDPTGYGRIVRNEIGIVERIVEQKDASVEEQAIHEINTGVYCFDNQKLFAALKRLTNDNAQGEYYLTDVIGILKEEGEIVTAYQMEDFDESMGVNDRSALAKATKIMQKRINTQLMKDGVTLVDPETAYIDTDVQIGQDTVIEGNVVIKGRTTIGADCLIGAGSRIEDSTLHDDVTIMSSTLERSEVHSGADVGPNSHLRPEAELGENVHVGNFCEVKKAYIGAGTKVGHLSYIGDATLGKNINVGCGVVFVNYDGTNKLHTNVGDHAFIGSNSNIVAPVNIAADSFVAAGSTITDSTEQFDMAIARARQVNKPGYAKKLPW.

The tract at residues 1–230 (MVNKNAIILA…FDESMGVNDR (230 aa)) is pyrophosphorylase. Residues 9 to 12 (LAAG), lysine 23, glutamine 73, 78 to 79 (GT), 101 to 103 (SGD), glycine 140, glutamate 155, asparagine 170, and asparagine 228 each bind UDP-N-acetyl-alpha-D-glucosamine. Mg(2+) is bound at residue aspartate 103. Asparagine 228 contributes to the Mg(2+) binding site. The segment at 231 to 251 (SALAKATKIMQKRINTQLMKD) is linker. The tract at residues 252–455 (GVTLVDPETA…KPGYAKKLPW (204 aa)) is N-acetyltransferase. UDP-N-acetyl-alpha-D-glucosamine is bound by residues arginine 333 and lysine 351. Residue histidine 363 is the Proton acceptor of the active site. Residues tyrosine 366 and asparagine 377 each contribute to the UDP-N-acetyl-alpha-D-glucosamine site. Acetyl-CoA-binding positions include 386–387 (NY), serine 405, alanine 423, and arginine 440.

In the N-terminal section; belongs to the N-acetylglucosamine-1-phosphate uridyltransferase family. It in the C-terminal section; belongs to the transferase hexapeptide repeat family. In terms of assembly, homotrimer. The cofactor is Mg(2+).

It localises to the cytoplasm. The catalysed reaction is alpha-D-glucosamine 1-phosphate + acetyl-CoA = N-acetyl-alpha-D-glucosamine 1-phosphate + CoA + H(+). It carries out the reaction N-acetyl-alpha-D-glucosamine 1-phosphate + UTP + H(+) = UDP-N-acetyl-alpha-D-glucosamine + diphosphate. Its pathway is nucleotide-sugar biosynthesis; UDP-N-acetyl-alpha-D-glucosamine biosynthesis; N-acetyl-alpha-D-glucosamine 1-phosphate from alpha-D-glucosamine 6-phosphate (route II): step 2/2. The protein operates within nucleotide-sugar biosynthesis; UDP-N-acetyl-alpha-D-glucosamine biosynthesis; UDP-N-acetyl-alpha-D-glucosamine from N-acetyl-alpha-D-glucosamine 1-phosphate: step 1/1. It participates in bacterial outer membrane biogenesis; LPS lipid A biosynthesis. In terms of biological role, catalyzes the last two sequential reactions in the de novo biosynthetic pathway for UDP-N-acetylglucosamine (UDP-GlcNAc). The C-terminal domain catalyzes the transfer of acetyl group from acetyl coenzyme A to glucosamine-1-phosphate (GlcN-1-P) to produce N-acetylglucosamine-1-phosphate (GlcNAc-1-P), which is converted into UDP-GlcNAc by the transfer of uridine 5-monophosphate (from uridine 5-triphosphate), a reaction catalyzed by the N-terminal domain. The chain is Bifunctional protein GlmU from Limosilactobacillus fermentum (strain NBRC 3956 / LMG 18251) (Lactobacillus fermentum).